A 256-amino-acid chain; its full sequence is Imidazole glycerol phosphate synthase subunit HisF (256 aa).

Catalysis depends on residues aspartate 11 and aspartate 130.

It belongs to the HisA/HisF family. In terms of assembly, heterodimer of HisH and HisF.

The protein localises to the cytoplasm. The enzyme catalyses 5-[(5-phospho-1-deoxy-D-ribulos-1-ylimino)methylamino]-1-(5-phospho-beta-D-ribosyl)imidazole-4-carboxamide + L-glutamine = D-erythro-1-(imidazol-4-yl)glycerol 3-phosphate + 5-amino-1-(5-phospho-beta-D-ribosyl)imidazole-4-carboxamide + L-glutamate + H(+). The protein operates within amino-acid biosynthesis; L-histidine biosynthesis; L-histidine from 5-phospho-alpha-D-ribose 1-diphosphate: step 5/9. Functionally, IGPS catalyzes the conversion of PRFAR and glutamine to IGP, AICAR and glutamate. The HisF subunit catalyzes the cyclization activity that produces IGP and AICAR from PRFAR using the ammonia provided by the HisH subunit. This chain is Imidazole glycerol phosphate synthase subunit HisF, found in Prochlorococcus marinus (strain MIT 9312).